A 518-amino-acid chain; its full sequence is Sodium-dependent glucose transporter 1 (518 aa).

12 helical membrane-spanning segments follow: residues 19-39 (TFQD…FIFV), 53-73 (GFLV…SATT), 82-102 (CKTA…IGIL), 107-127 (NVLI…ALHF), 139-159 (LAKL…SDFH), 221-241 (FRRA…FFFY), 307-327 (TSSL…IATS), 347-367 (YTTI…LGEM), 376-396 (LQGK…ASIA), 400-420 (LFPV…KEDR), 438-458 (EEEN…EMIE), and 466-486 (SIIE…YNQY). Positions 414-426 (RQRKEDRKSEDQK) are enriched in basic and acidic residues. The tract at residues 414 to 448 (RQRKEDRKSEDQKALLSSSGLNEYEEENEEEDAEK) is disordered. A compositionally biased stretch (acidic residues) spans 436 to 448 (EYEEENEEEDAEK).

The protein belongs to the major facilitator superfamily.

It localises to the apical cell membrane. Its function is as follows. May function as a sodium-dependent glucose transporter. Potential channels for urea in the inner medulla of kidney. This is Sodium-dependent glucose transporter 1 from Homo sapiens (Human).